The chain runs to 319 residues: Protein-methionine methyltransferase laeA (319 aa).

The tract at residues 269–293 (REPQSGTCSVQRENGANGDRSTLSA) is disordered. Residues 270 to 293 (EPQSGTCSVQRENGANGDRSTLSA) show a composition bias toward polar residues.

This sequence belongs to the methyltransferase superfamily. LaeA methyltransferase family. In terms of assembly, component of the heterotrimeric velvet complex composed of laeA, veA and velB; VeA acting as a bridging protein between laeA and velB.

The protein resides in the nucleus. The enzyme catalyses L-methionyl-[protein] + S-adenosyl-L-methionine = S-methyl-L-methionyl-[protein] + S-adenosyl-L-homocysteine. Its function is as follows. Methyltransferase; component of the velvet transcription factor complex that acts as a global regulator for secondary metabolite gene expression. Controls the expression of the chaetoglobosin A biosynthesis cluster via the cheR transcription factor and the subsequent production of chaetoglobosin A. Positively regulates the expression of smtA and negatively regulates the expression of velB. LaeA also regulates pigmentation and spores production. The chain is Protein-methionine methyltransferase laeA from Chaetomium globosum (strain ATCC 6205 / CBS 148.51 / DSM 1962 / NBRC 6347 / NRRL 1970) (Soil fungus).